We begin with the raw amino-acid sequence, 720 residues long: DNA helicase II (720 aa).

In terms of domain architecture, UvrD-like helicase ATP-binding spans 8-286 (DSLNDKQREA…IRLEQNYRST (279 aa)). Residues 32–37 (GSGKTR) and R284 each bind ATP. The UvrD-like helicase C-terminal domain maps to 287–564 (SNILSAANAL…QLMTLHSAKG (278 aa)).

This sequence belongs to the helicase family. UvrD subfamily.

The catalysed reaction is Couples ATP hydrolysis with the unwinding of duplex DNA by translocating in the 3'-5' direction.. It carries out the reaction ATP + H2O = ADP + phosphate + H(+). Functionally, a helicase with DNA-dependent ATPase activity. Unwinds DNA duplexes with 3'-5' polarity. Translocates on single-stranded DNA with 3'-5' polarity. Initiates unwinding more efficiently from a nicked substrate than double-stranded DNA. Involved in the post-incision events of nucleotide excision repair and methyl-directed mismatch repair, and probably also in repair of alkylated DNA. This is DNA helicase II from Escherichia coli (strain K12).